A 244-amino-acid polypeptide reads, in one-letter code: DNA polymerase sliding clamp (244 aa).

Belongs to the PCNA family. In terms of assembly, homotrimer. The subunits circularize to form a toroid; DNA passes through its center. Replication factor C (RFC) is required to load the toroid on the DNA.

In terms of biological role, sliding clamp subunit that acts as a moving platform for DNA processing. Responsible for tethering the catalytic subunit of DNA polymerase and other proteins to DNA during high-speed replication. The chain is DNA polymerase sliding clamp from Methanobrevibacter smithii (strain ATCC 35061 / DSM 861 / OCM 144 / PS).